We begin with the raw amino-acid sequence, 1357 residues long: DNA-directed RNA polymerase subunit beta (1357 aa).

This sequence belongs to the RNA polymerase beta chain family. As to quaternary structure, the RNAP catalytic core consists of 2 alpha, 1 beta, 1 beta' and 1 omega subunit. When a sigma factor is associated with the core the holoenzyme is formed, which can initiate transcription.

It carries out the reaction RNA(n) + a ribonucleoside 5'-triphosphate = RNA(n+1) + diphosphate. DNA-dependent RNA polymerase catalyzes the transcription of DNA into RNA using the four ribonucleoside triphosphates as substrates. This is DNA-directed RNA polymerase subunit beta from Pseudomonas putida (strain ATCC 700007 / DSM 6899 / JCM 31910 / BCRC 17059 / LMG 24140 / F1).